The following is a 519-amino-acid chain: Cytochrome P450 monooxygenase apdE (519 aa).

Residues 27-47 traverse the membrane as a helical segment; sequence FVFFAFVVYSCFTIAVGWVVY. N-linked (GlcNAc...) asparagine glycosylation is found at asparagine 327 and asparagine 379. A heme-binding site is contributed by cysteine 466. Asparagine 508 carries an N-linked (GlcNAc...) asparagine glycan.

It belongs to the cytochrome P450 family. It depends on heme as a cofactor.

The protein resides in the membrane. It participates in secondary metabolite biosynthesis. In terms of biological role, cytochrome P450 monooxygenase; part of the gene cluster that mediates the biosynthesis of aspyridones. The polyketide-amino acid backbone preaspyridone A is first assembled by the PKS-NRPS hybrid apdA. The assembly of preaspyridone A is initiated by loading of malonyl-CoA onto apdA, followed by decarboxylation to yield the acetyl starter unit. The growing polyketide chain then elongates into a tetraketide. The adpA PKS module catalyzes three Claisen condensations, as well as beta-keto processing and methylation. Alpha-methylation step during polyketide synthesis is a prerequisite and a key checkpoint for chain transfer between PKS and NRPS modules. The downstream NRPS module contains the condensation (C), adenylation (A), and thiolation (T) domains and catalyzes the incorporation of tyrosine via the formation of the L-tyrosinyl-thioester and the amide linkage between L-tyrosinyl-thioester and the tetraketide. The bimodular assembly line is terminated with a reductase (R) domain that facilitates formation and release of the tetramic acid product. Because apdA lacks a designated enoylreductase (ER) domain, the required activity is provided the enoyl reductase apdC. ApdC appears to operate with different stereoselectivity in different PKS cycle. Combined with apdC, apdA is proposed to synthesize preaspyridone A via about 20 enzymatic steps. A number of oxidative steps performed successively by the cytochrome P450 monooxygenases apdE and apdB are required for the conversion of preaspyridone A to aspyridone A. The cytochrome P450 monooxygenase apdE is responsible for the oxidative dephenylation of preaspyridone A. Finally, the predicted FAD-dependent monooxygenase apdD and the acyl-CoA dehydrogenase apdG may be involved in the transformation of aspyridone A into aspyridone B. The protein is Cytochrome P450 monooxygenase apdE of Emericella nidulans (strain FGSC A4 / ATCC 38163 / CBS 112.46 / NRRL 194 / M139) (Aspergillus nidulans).